The following is a 163-amino-acid chain: EF-hand calcium-binding domain-containing protein 11 (163 aa).

3 EF-hand domains span residues 18–53, 91–126, and 127–162; these read SEHR…LFGY, RYRN…VAPK, and LPER…GQKE. The Ca(2+) site is built by Asp140, Asp142, Asp144, His146, and Asp151.

This is EF-hand calcium-binding domain-containing protein 11 (EFCAB11) from Homo sapiens (Human).